The sequence spans 659 residues: Acetyl-coenzyme A synthetase (659 aa).

Residues 206 to 209 (RRGK) and Thr-324 contribute to the CoA site. Residues 400-402 (GEP), 424-429 (DTWWQT), Asp-516, Arg-531, and Arg-542 each bind ATP. Positions 553 and 555 each coordinate Mg(2+). Arg-600 is a binding site for CoA.

This sequence belongs to the ATP-dependent AMP-binding enzyme family. It depends on Mg(2+) as a cofactor.

It catalyses the reaction acetate + ATP + CoA = acetyl-CoA + AMP + diphosphate. In terms of biological role, catalyzes the conversion of acetate into acetyl-CoA (AcCoA), an essential intermediate at the junction of anabolic and catabolic pathways. AcsA undergoes a two-step reaction. In the first half reaction, AcsA combines acetate with ATP to form acetyl-adenylate (AcAMP) intermediate. In the second half reaction, it can then transfer the acetyl group from AcAMP to the sulfhydryl group of CoA, forming the product AcCoA. The sequence is that of Acetyl-coenzyme A synthetase (acsA) from Methanothrix thermoacetophila (strain DSM 6194 / JCM 14653 / NBRC 101360 / PT) (Methanosaeta thermophila).